The chain runs to 260 residues: Proteasome subunit alpha (260 aa).

It belongs to the peptidase T1A family. As to quaternary structure, the 20S proteasome core is composed of 14 alpha and 14 beta subunits that assemble into four stacked heptameric rings, resulting in a barrel-shaped structure. The two inner rings, each composed of seven catalytic beta subunits, are sandwiched by two outer rings, each composed of seven alpha subunits. The catalytic chamber with the active sites is on the inside of the barrel. Has a gated structure, the ends of the cylinder being occluded by the N-termini of the alpha-subunits. Is capped at one or both ends by the proteasome regulatory ATPase, PAN.

It is found in the cytoplasm. The formation of the proteasomal ATPase PAN-20S proteasome complex, via the docking of the C-termini of PAN into the intersubunit pockets in the alpha-rings, triggers opening of the gate for substrate entry. Interconversion between the open-gate and close-gate conformations leads to a dynamic regulation of the 20S proteasome proteolysis activity. Component of the proteasome core, a large protease complex with broad specificity involved in protein degradation. This Thermococcus sp. (strain JCM 11816 / KS-1) protein is Proteasome subunit alpha.